Consider the following 61-residue polypeptide: Small ribosomal subunit protein uS14 (61 aa).

Zn(2+) contacts are provided by C24, C27, C40, and C43.

Belongs to the universal ribosomal protein uS14 family. Zinc-binding uS14 subfamily. Part of the 30S ribosomal subunit. Contacts proteins S3 and S10. Requires Zn(2+) as cofactor.

Binds 16S rRNA, required for the assembly of 30S particles and may also be responsible for determining the conformation of the 16S rRNA at the A site. The protein is Small ribosomal subunit protein uS14 of Desulfatibacillum aliphaticivorans.